A 156-amino-acid polypeptide reads, in one-letter code: Phosphopantetheine adenylyltransferase (156 aa).

Ser9 provides a ligand contact to substrate. ATP is bound by residues Ser9 to Phe10 and His17. Substrate is bound by residues Lys41, Ile74, and Lys88. Residues Gly89 to Arg91, Glu99, and Leu123 to Ser129 contribute to the ATP site.

This sequence belongs to the bacterial CoaD family. As to quaternary structure, homohexamer. Mg(2+) serves as cofactor.

The protein localises to the cytoplasm. The enzyme catalyses (R)-4'-phosphopantetheine + ATP + H(+) = 3'-dephospho-CoA + diphosphate. It functions in the pathway cofactor biosynthesis; coenzyme A biosynthesis; CoA from (R)-pantothenate: step 4/5. Functionally, reversibly transfers an adenylyl group from ATP to 4'-phosphopantetheine, yielding dephospho-CoA (dPCoA) and pyrophosphate. In Kocuria rhizophila (strain ATCC 9341 / DSM 348 / NBRC 103217 / DC2201), this protein is Phosphopantetheine adenylyltransferase.